The primary structure comprises 1213 residues: DNA-directed RNA polymerase subunit beta' (1213 aa).

Cysteine 60, cysteine 62, cysteine 75, and cysteine 78 together coordinate Zn(2+). Aspartate 450, aspartate 452, and aspartate 454 together coordinate Mg(2+). 4 residues coordinate Zn(2+): cysteine 819, cysteine 893, cysteine 900, and cysteine 903.

This sequence belongs to the RNA polymerase beta' chain family. As to quaternary structure, the RNAP catalytic core consists of 2 alpha, 1 beta, 1 beta' and 1 omega subunit. When a sigma factor is associated with the core the holoenzyme is formed, which can initiate transcription. Mg(2+) is required as a cofactor. Zn(2+) serves as cofactor.

It carries out the reaction RNA(n) + a ribonucleoside 5'-triphosphate = RNA(n+1) + diphosphate. Functionally, DNA-dependent RNA polymerase catalyzes the transcription of DNA into RNA using the four ribonucleoside triphosphates as substrates. The chain is DNA-directed RNA polymerase subunit beta' from Streptococcus pyogenes serotype M18 (strain MGAS8232).